The primary structure comprises 227 residues: Charged multivesicular body protein 4c (227 aa).

The tract at residues 1-27 (MSKITKLFKSSGGSGSSSKNRKGPSAQ) is disordered. Coiled-coil stretches lie at residues 32-94 (KLRE…STIE) and 129-187 (LEKI…MANV). Residues 178–227 (EDLNSQMANVNLPSVPSSKLPSTKLPSRPASSRKKVEDDDDMQMLAAWAT) are disordered. Residues 189–206 (LPSVPSSKLPSTKLPSRP) are compositionally biased toward low complexity.

The protein belongs to the SNF7 family. As to quaternary structure, probable core component of the endosomal sorting required for transport complex III (ESCRT-III). ESCRT-III components are thought to multimerize to form a flat lattice on the perimeter membrane of the endosome.

It is found in the cytoplasm. It localises to the cytosol. Its subcellular location is the late endosome membrane. Probable core component of the endosomal sorting required for transport complex III (ESCRT-III) which is involved in multivesicular bodies (MVBs) formation and sorting of endosomal cargo proteins into MVBs. MVBs contain intraluminal vesicles (ILVs) that are generated by invagination and scission from the limiting membrane of the endosome and mostly are delivered to lysosomes enabling degradation of membrane proteins, such as stimulated growth factor receptors, lysosomal enzymes and lipids. Key component of the cytokinesis checkpoint, a process required to delay abscission to prevent both premature resolution of intercellular chromosome bridges and accumulation of DNA damage. The sequence is that of Charged multivesicular body protein 4c (chmp4c) from Xenopus laevis (African clawed frog).